Here is a 265-residue protein sequence, read N- to C-terminus: Auxin-responsive protein IAA22 (265 aa).

2 disordered regions span residues 54 to 88 (LSTP…ERRP) and 172 to 199 (DGRE…SPAM). The span at 65-88 (LMNKMKPCSDEGHGSRDAAQERRP) shows a compositional bias: basic and acidic residues. The PB1 domain maps to 91–194 (TMFVKVNLEG…GVDQVSERPD (104 aa)).

It belongs to the Aux/IAA family. As to quaternary structure, homodimers and heterodimers. Highly expressed in flowers. Expressed in roots and seedlings.

It is found in the nucleus. Functionally, aux/IAA proteins are short-lived transcriptional factors that function as repressors of early auxin response genes at low auxin concentrations. This chain is Auxin-responsive protein IAA22 (IAA22), found in Oryza sativa subsp. japonica (Rice).